The chain runs to 715 residues: Protein naked cuticle homolog (715 aa).

Residues 18-53 (KKPQPLQFSFTLYDLDGHGKITKDDIAGIVSTIYES) form the EF-hand domain. The interval 256–282 (SRAKRKVVRKSRSSRKASKLTDDFSRP) is disordered. The span at 257–273 (RAKRKVVRKSRSSRKAS) shows a compositional bias: basic residues. The segment at 305 to 334 (ECWKSSLCRRELIEIIRDSMVKNSLCFQPN) is required for nuclear localization and inhibition of Wnt signaling. The segment at 639–690 (ELHQSVQQQQGTHQQQQQPQSSVSSPTHHHHHHAGASLLGENSGSSASAAST) is disordered. Composition is skewed to low complexity over residues 642 to 664 (QSVQ…VSSP) and 673 to 690 (GASL…AAST).

The protein belongs to the NKD family.

It localises to the cell membrane. Its subcellular location is the cytoplasm. It is found in the nucleus. Cell autonomous antagonist of the canonical Wnt signaling pathway. May activate a second Wnt signaling pathway that controls planar cell polarity. Required for neuroblast specification. This is Protein naked cuticle homolog from Aedes aegypti (Yellowfever mosquito).